Consider the following 166-residue polypeptide: Regulator of ribonuclease activity A (166 aa).

The protein belongs to the RraA family. In terms of assembly, homotrimer. Binds to both RNA-binding sites in the C-terminal region of Rne and to RhlB.

Its subcellular location is the cytoplasm. Its function is as follows. Globally modulates RNA abundance by binding to RNase E (Rne) and regulating its endonucleolytic activity. Can modulate Rne action in a substrate-dependent manner by altering the composition of the degradosome. Modulates RNA-binding and helicase activities of the degradosome. The chain is Regulator of ribonuclease activity A from Histophilus somni (strain 2336) (Haemophilus somnus).